We begin with the raw amino-acid sequence, 137 residues long: Small ribosomal subunit protein uS9 (137 aa).

It belongs to the universal ribosomal protein uS9 family.

The chain is Small ribosomal subunit protein uS9 from Picosynechococcus sp. (strain ATCC 27264 / PCC 7002 / PR-6) (Agmenellum quadruplicatum).